We begin with the raw amino-acid sequence, 322 residues long: ATP-dependent 6-phosphofructokinase (322 aa).

Residue glycine 12 participates in ATP binding. 22–26 (RATAK) is an ADP binding site. Residues 73–74 (RS) and 103–106 (GDGS) contribute to the ATP site. Residue aspartate 104 participates in Mg(2+) binding. Substrate is bound at residue 127–129 (TID). Catalysis depends on aspartate 129, which acts as the Proton acceptor. ADP is bound at residue arginine 156. Residues arginine 164 and 171–173 (MGR) contribute to the substrate site. ADP is bound by residues 187 to 189 (GGD) and 215 to 217 (KLH). Substrate is bound by residues glutamate 224, arginine 245, and 251–254 (HIQR).

It belongs to the phosphofructokinase type A (PFKA) family. ATP-dependent PFK group I subfamily. Prokaryotic clade 'B1' sub-subfamily. In terms of assembly, homotetramer. Mg(2+) serves as cofactor.

It localises to the cytoplasm. The catalysed reaction is beta-D-fructose 6-phosphate + ATP = beta-D-fructose 1,6-bisphosphate + ADP + H(+). Its pathway is carbohydrate degradation; glycolysis; D-glyceraldehyde 3-phosphate and glycerone phosphate from D-glucose: step 3/4. With respect to regulation, allosterically activated by ADP and other diphosphonucleosides, and allosterically inhibited by phosphoenolpyruvate. Catalyzes the phosphorylation of D-fructose 6-phosphate to fructose 1,6-bisphosphate by ATP, the first committing step of glycolysis. In Fusobacterium nucleatum subsp. nucleatum (strain ATCC 25586 / DSM 15643 / BCRC 10681 / CIP 101130 / JCM 8532 / KCTC 2640 / LMG 13131 / VPI 4355), this protein is ATP-dependent 6-phosphofructokinase.